The primary structure comprises 274 residues: Actin-binding protein Smlt3054 (274 aa).

ANK repeat units lie at residues 192–221 (SGNT…DVAA) and 225–254 (HGWA…NPEQ). Positions 251-274 (NPEQPGWRGRTPTRMHRHEQTQAL) are disordered.

As to quaternary structure, exists as a dimer as well as a higher order oligomer.

It localises to the secreted. Its subcellular location is the periplasm. Its function is as follows. Directly binds F-actin, which results in thickened and distorted F-actin fibers, and affects cellular F-actin localization. Thus, may be a host effector whose function is to disrupt host actin cytoskeletal structure, which may enhance invasion. The chain is Actin-binding protein Smlt3054 from Stenotrophomonas maltophilia (strain K279a).